A 122-amino-acid polypeptide reads, in one-letter code: Large ribosomal subunit protein bL19 (122 aa).

This sequence belongs to the bacterial ribosomal protein bL19 family.

This protein is located at the 30S-50S ribosomal subunit interface and may play a role in the structure and function of the aminoacyl-tRNA binding site. This Mycoplasmoides gallisepticum (strain R(low / passage 15 / clone 2)) (Mycoplasma gallisepticum) protein is Large ribosomal subunit protein bL19.